We begin with the raw amino-acid sequence, 34 residues long: Photosystem II reaction center protein M (34 aa).

A helical membrane pass occupies residues 5–25 (ILALIAIALFISVPTAFLIII).

This sequence belongs to the PsbM family. In terms of assembly, PSII is composed of 1 copy each of membrane proteins PsbA, PsbB, PsbC, PsbD, PsbE, PsbF, PsbH, PsbI, PsbJ, PsbK, PsbL, PsbM, PsbT, PsbX, PsbY, PsbZ, Psb30/Ycf12, at least 3 peripheral proteins of the oxygen-evolving complex and a large number of cofactors. It forms dimeric complexes.

It localises to the plastid. It is found in the chloroplast thylakoid membrane. Its function is as follows. One of the components of the core complex of photosystem II (PSII). PSII is a light-driven water:plastoquinone oxidoreductase that uses light energy to abstract electrons from H(2)O, generating O(2) and a proton gradient subsequently used for ATP formation. It consists of a core antenna complex that captures photons, and an electron transfer chain that converts photonic excitation into a charge separation. This subunit is found at the monomer-monomer interface. The sequence is that of Photosystem II reaction center protein M from Gnetum parvifolium (Small-leaved jointfir).